The sequence spans 392 residues: tRNA (guanine-N(7)-)-methyltransferase (392 aa).

3 residues coordinate S-adenosyl-L-methionine: E123, E148, and D175. Substrate-binding residues include K201 and D231.

The protein belongs to the class I-like SAM-binding methyltransferase superfamily. TrmB family.

It catalyses the reaction guanosine(46) in tRNA + S-adenosyl-L-methionine = N(7)-methylguanosine(46) in tRNA + S-adenosyl-L-homocysteine. It functions in the pathway tRNA modification; N(7)-methylguanine-tRNA biosynthesis. Functionally, catalyzes the formation of N(7)-methylguanine at position 46 (m7G46) in tRNA. This Campylobacter jejuni (strain RM1221) protein is tRNA (guanine-N(7)-)-methyltransferase.